We begin with the raw amino-acid sequence, 44 residues long: Mu-conotoxin-like Cal 12.1.2f (44 aa).

4 disulfides stabilise this stretch: Cys3–Cys15, Cys10–Cys27, Cys17–Cys32, and Cys26–Cys38. Trp16 is modified (6'-bromotryptophan). 4-hydroxyproline is present on Pro22. 6'-bromotryptophan is present on residues Trp36 and Trp37. 4-hydroxyproline is present on Pro39. Trp43 is modified (6'-bromotryptophan).

As to expression, expressed by the venom duct.

Its subcellular location is the secreted. Functionally, mu-conotoxins block voltage-gated sodium channels. This toxin reversibly blocks voltage-gated sodium channel in cephalopods, with no alteration in the voltage dependence of sodium conductance or on the kinetics of inactivation. This Californiconus californicus (California cone) protein is Mu-conotoxin-like Cal 12.1.2f.